Reading from the N-terminus, the 180-residue chain is ATP-dependent protease subunit HslV (180 aa).

Residue Thr7 is part of the active site. 3 residues coordinate Na(+): Gly165, Cys168, and Thr171.

It belongs to the peptidase T1B family. HslV subfamily. In terms of assembly, a double ring-shaped homohexamer of HslV is capped on each side by a ring-shaped HslU homohexamer. The assembly of the HslU/HslV complex is dependent on binding of ATP.

It is found in the cytoplasm. The catalysed reaction is ATP-dependent cleavage of peptide bonds with broad specificity.. Allosterically activated by HslU binding. Protease subunit of a proteasome-like degradation complex believed to be a general protein degrading machinery. This Bacillus anthracis (strain A0248) protein is ATP-dependent protease subunit HslV.